We begin with the raw amino-acid sequence, 385 residues long: ELAV-like protein 4 (385 aa).

The interval 12–48 (TMEPQVSNGPTSNTSNGPSSNNRNCPSPMQTGATTDD) is disordered. The segment covering 18–33 (SNGPTSNTSNGPSSNN) has biased composition (low complexity). The segment covering 34–48 (RNCPSPMQTGATTDD) has biased composition (polar residues). S38 is subject to Phosphoserine. RRM domains are found at residues 51-129 (TNLI…YARP) and 137-217 (ANLY…FANN). At S233 the chain carries Phosphoserine. The residue at position 248 (R248) is an Asymmetric dimethylarginine; by CARM1; alternate. Omega-N-methylarginine; by CARM1; alternate is present on R248. The RRM 3 domain occupies 302–380 (WCIFVYNLSP…RVLQVSFKTN (79 aa)).

This sequence belongs to the RRM elav family. Component of a TAU mRNP complex, at least composed of IGF2BP1, ELAVL4 and G3BP. Associates with the EIF4F cap-binding complex, composed of EIF4G, EIF4A, EIF4E and PABP. Within the EIF4F cap-binding complex, interacts with EIF4A. Interacts with SMN (via Tudor domain) in an RNA-independent manner; the interaction is required for localization of ELAVL4 to RNA granules. Interacts with MAP1 light chain LC1 (via C-terminus); the interaction contributes to the association of ELAVL4 with microtubules. Interacts with MAP1 light chain LC2. Methylated by CARM1, which leads to reduced RNA-binding activity and enhanced interaction with SMN. Methylation at Arg-248 by CARM1 weakens protective binding to the 3'UTR of CDKN1A mRNA and down-regulates CDKN1A protein expression, thereby maintaining cells in a proliferative state. Methylation is inhibited by NGF, which facilitates neurite outgrowth. Expressed in pancreatic beta cells (at protein level). Expressed in the brain.

It is found in the cytoplasm. It localises to the perikaryon. The protein resides in the cell projection. The protein localises to the dendrite. Its subcellular location is the axon. It is found in the growth cone. RNA-binding protein that is involved in the post-transcriptional regulation of mRNAs. Plays a role in the regulation of mRNA stability, alternative splicing and translation. Binds to AU-rich element (ARE) sequences in the 3' untranslated region (UTR) of target mRNAs, including GAP43, VEGF, FOS, CDKN1A and ACHE mRNA. Many of the target mRNAs are coding for RNA-binding proteins, transcription factors and proteins involved in RNA processing and/or neuronal development and function. By binding to the mRNA 3'UTR, decreases mRNA deadenylation and thereby contributes to the stabilization of mRNA molecules and their protection from decay. Also binds to the polyadenylated (poly(A)) tail in the 3'UTR of mRNA, thereby increasing its affinity for mRNA binding. Mainly plays a role in neuron-specific RNA processing by stabilization of mRNAs such as GAP43, ACHE and mRNAs of other neuronal proteins, thereby contributing to the differentiation of neural progenitor cells, nervous system development, learning and memory mechanisms. Involved in the negative regulation of the proliferative activity of neuronal stem cells and in the positive regulation of neuronal differentiation of neural progenitor cells. Promotes neuronal differentiation of neural stem/progenitor cells in the adult subventricular zone of the hippocampus by binding to and stabilizing SATB1 mRNA. Binds and stabilizes MSI1 mRNA in neural stem cells. Exhibits increased binding to ACHE mRNA during neuronal differentiation, thereby stabilizing ACHE mRNA and enhancing its expression. Protects CDKN1A mRNA from decay by binding to its 3'-UTR. May bind to APP and BACE1 mRNAS and the BACE1AS lncRNA and enhance their stabilization. Plays a role in neurite outgrowth and in the establishment and maturation of dendritic arbors, thereby contributing to neocortical and hippocampal circuitry function. Stabilizes GAP43 mRNA and protects it from decay during postembryonic development in the brain. By promoting the stabilization of GAP43 mRNA, plays a role in NGF-mediated neurite outgrowth. Binds to BDNF long 3'UTR mRNA, thereby leading to its stabilization and increased dendritic translation after activation of PKC. By increasing translation of BDNF after nerve injury, may contribute to nerve regeneration. Acts as a stabilizing factor by binding to the 3'UTR of NOVA1 mRNA, thereby increasing its translation and enhancing its functional activity in neuron-specific splicing. Stimulates translation of mRNA in a poly(A)- and cap-dependent manner, possibly by associating with the EIF4F cap-binding complex. May also negatively regulate translation by binding to the 5'UTR of Ins2 mRNA, thereby repressing its translation. Upon glucose stimulation, Ins2 mRNA is released from ELAVL4 and translational inhibition is abolished. Also plays a role in the regulation of alternative splicing. May regulate alternative splicing of CALCA pre-mRNA into Calcitonin and Calcitonin gene-related peptide 1 (CGRP) by competing with splicing regulator TIAR for binding to U-rich intronic sequences of CALCA pre-mRNA. This is ELAV-like protein 4 (ELAVL4) from Homo sapiens (Human).